An 84-amino-acid chain; its full sequence is Small ribosomal subunit protein bS20 (84 aa).

It belongs to the bacterial ribosomal protein bS20 family.

In terms of biological role, binds directly to 16S ribosomal RNA. This chain is Small ribosomal subunit protein bS20, found in Phocaeicola vulgatus (strain ATCC 8482 / DSM 1447 / JCM 5826 / CCUG 4940 / NBRC 14291 / NCTC 11154) (Bacteroides vulgatus).